The sequence spans 467 residues: MAADTRAKAVTLDLRRRLLSSSCRLFFPEDPVKIIRGQGQYLYDEQGREYLDCINNVAHVGHCHPTVVQAAHEQNLVLNTNSRYLHDNIVDYAQRLSETLPEQLSVFYFLNSGSEANDLALRLARQYTGHQDVVVLDHAYHGHLSSLIDISPYKFRNLGGQKEWVHVAPLPDTYRGPYREDHPNPAEAYANEVKHVISSAQQKGRKIAAFFAESLPSVSGQIIPPAGYFSQVAEHIHRAGGLFVADEIQVGFGRIGKHFWAFQLEGEDFVPDIVTMGKSIGNGHPVACMATTQAVSRAFEATGVEYFNTFGGNPVSCAVGLAVLDVLKTEQLQAHATNVGSFLLEHLTQQKAKHPIIGDVRGTGLFIGVDLIKDETLRTPATEEAEYLVSRLKENYILLSIDGPGKNILKFKPPMCFNVDNAQHVVAKLDDILTDMEEKVRSCETLRIKHPPEDTHPTQILLTRQQD.

Lys-278 is modified (N6-(pyridoxal phosphate)lysine).

It belongs to the class-III pyridoxal-phosphate-dependent aminotransferase family. As to quaternary structure, homotetramer. Requires pyridoxal 5'-phosphate as cofactor.

Its subcellular location is the mitochondrion. It carries out the reaction (5R)-5-phosphooxy-L-lysine + H2O = (S)-2-amino-6-oxohexanoate + NH4(+) + phosphate. Catalyzes the pyridoxal-phosphate-dependent breakdown of 5-phosphohydroxy-L-lysine, converting it to ammonia, inorganic phosphate and 2-aminoadipate semialdehyde. The chain is 5-phosphohydroxy-L-lysine phospho-lyase (Phykpl) from Mus musculus (Mouse).